The chain runs to 428 residues: Adenylosuccinate synthetase (428 aa).

GTP contacts are provided by residues 12 to 18 (GDEGKGK) and 40 to 42 (GHT). Aspartate 13 serves as the catalytic Proton acceptor. Mg(2+) contacts are provided by aspartate 13 and glycine 40. IMP-binding positions include 13–16 (DEGK), 38–41 (NAGH), threonine 133, arginine 147, asparagine 224, threonine 239, and arginine 303. Histidine 41 (proton donor) is an active-site residue. Position 299-305 (299-305 (TTTGRRR)) interacts with substrate. GTP is bound by residues arginine 305, 331 to 333 (KLD), and 413 to 415 (GVG).

The protein belongs to the adenylosuccinate synthetase family. In terms of assembly, homodimer. It depends on Mg(2+) as a cofactor.

Its subcellular location is the cytoplasm. It catalyses the reaction IMP + L-aspartate + GTP = N(6)-(1,2-dicarboxyethyl)-AMP + GDP + phosphate + 2 H(+). It functions in the pathway purine metabolism; AMP biosynthesis via de novo pathway; AMP from IMP: step 1/2. Plays an important role in the de novo pathway and in the salvage pathway of purine nucleotide biosynthesis. Catalyzes the first committed step in the biosynthesis of AMP from IMP. The polypeptide is Adenylosuccinate synthetase (Coprinopsis cinerea (strain Okayama-7 / 130 / ATCC MYA-4618 / FGSC 9003) (Inky cap fungus)).